We begin with the raw amino-acid sequence, 264 residues long: Thymidylate synthase (264 aa).

Residue arginine 21 coordinates dUMP. Histidine 51 contacts (6R)-5,10-methylene-5,6,7,8-tetrahydrofolate. 126-127 (RR) provides a ligand contact to dUMP. Residue cysteine 146 is the Nucleophile of the active site. Residues 166 to 169 (RSCD), asparagine 177, and 207 to 209 (HLY) contribute to the dUMP site. Aspartate 169 is a binding site for (6R)-5,10-methylene-5,6,7,8-tetrahydrofolate. Alanine 263 serves as a coordination point for (6R)-5,10-methylene-5,6,7,8-tetrahydrofolate.

The protein belongs to the thymidylate synthase family. Bacterial-type ThyA subfamily. As to quaternary structure, homodimer.

The protein resides in the cytoplasm. It carries out the reaction dUMP + (6R)-5,10-methylene-5,6,7,8-tetrahydrofolate = 7,8-dihydrofolate + dTMP. Its pathway is pyrimidine metabolism; dTTP biosynthesis. Functionally, catalyzes the reductive methylation of 2'-deoxyuridine-5'-monophosphate (dUMP) to 2'-deoxythymidine-5'-monophosphate (dTMP) while utilizing 5,10-methylenetetrahydrofolate (mTHF) as the methyl donor and reductant in the reaction, yielding dihydrofolate (DHF) as a by-product. This enzymatic reaction provides an intracellular de novo source of dTMP, an essential precursor for DNA biosynthesis. The sequence is that of Thymidylate synthase from Sodalis glossinidius (strain morsitans).